Consider the following 749-residue polypeptide: MAEELVPEVLVAWPTRDYIRRPITGVFEFSQSSWPFSSRCVGELVGIFLPVMIAILPLPPQITQYFPHQLVSVLQWFAFWAFSALLIIPWLFCVNRFVIHSLGRTKRVKEALDDRTAPKTVIVMPVYKEDPVVLIKAIDSVVNSDYPSYCIHVFLSYDGCNIDEPYLQVINHLGIPISLESYPQSIDVTYQGARITVSRFKHGGKRHCQKQTFRLIDKVYADYLKHHDDLFLLFIDSDCILDKLCLQNFMYDMELKPGSQHNMLAMTGIITSTTERNSLITVLQDMEYIHGQLVERTVESGCGAVTCLPGALTILRFSAFRKMARYYFADKAEQCEDLFDYGKCHLGEDRWLTHLFMIGAIERYQIQMCTSAFCKTEAVQTFCSLLKQRRRWFLGYITNEVCMLTDVRLWKRYPLLCLVRFMQNTIRTTALLFFILAISIITTSSKIKNLPVGFIAVSLGLNYILMVYFGIRLKRFKAWLYPLMFILNPFFNWLYIVYGIFTAGQRTWGGPRADAAKADEHTTPEEAVEKARVQGDELNVQVDTFRTKTEEKGVPIRPSSKVNGRLSFAPQLPDRYYDYQGALGTSLAKYLTPLPDVPRIGLHPHCSSDSVATSDSGGNSISLPQHVETLMSAEERAKLYIGSQAQESTGLLHTQEADGGERGLDVQSNEDLEDNRAYEMHTIESGSGIPSGKAPVLSSSVPQSGMQQSRAVPGNMSQPHEHLPQPKYTKRPSRIPRQKRRYMQPEQMV.

A run of 5 helical transmembrane segments spans residues 40-60, 73-93, 421-441, 451-471, and 483-503; these read CVGE…PLPP, VLQW…WLFC, FMQN…ISII, PVGF…YFGI, and LMFI…IFTA. The tract at residues 683–749 is disordered; that stretch reads IESGSGIPSG…RRYMQPEQMV (67 aa). Polar residues predominate over residues 697-718; the sequence is LSSSVPQSGMQQSRAVPGNMSQ. A glycan (N-linked (GlcNAc...) asparagine) is linked at N715. Residues 728–742 are compositionally biased toward basic residues; the sequence is YTKRPSRIPRQKRRY.

It belongs to the chitin synthase family. Class VI subfamily.

The protein resides in the cell membrane. It catalyses the reaction [(1-&gt;4)-N-acetyl-beta-D-glucosaminyl](n) + UDP-N-acetyl-alpha-D-glucosamine = [(1-&gt;4)-N-acetyl-beta-D-glucosaminyl](n+1) + UDP + H(+). In terms of biological role, polymerizes chitin, a structural polymer of the cell wall and septum, by transferring the sugar moiety of UDP-GlcNAc to the non-reducing end of the growing chitin polymer. Plays an important role in septal growth or maintenance. Mediates colony spore formation. In Aspergillus niger (strain ATCC MYA-4892 / CBS 513.88 / FGSC A1513), this protein is Chitin synthase G.